A 635-amino-acid polypeptide reads, in one-letter code: Arabinoxylan arabinofuranohydrolase (635 aa).

Positions 1-26 are cleaved as a signal peptide; the sequence is MIRKCLVLFLSFALLLSVFPMLNVDA. Catalysis depends on D49, which acts as the Proton acceptor. Residue E248 is the Proton donor of the active site. N311 serves as a coordination point for substrate. CBM6 domains follow at residues 379 to 508 and 517 to 634; these read TRVE…WQFT and TKVE…IEFS. The Ca(2+) site is built by E382, E384, N406, L407, D503, E520, E522, D539, Y544, D620, W624, D625, and D629.

It belongs to the glycosyl hydrolase 43 family.

Its subcellular location is the secreted. The enzyme catalyses Hydrolysis of terminal non-reducing alpha-L-arabinofuranoside residues in alpha-L-arabinosides.. It participates in glycan degradation; xylan degradation. Its activity is regulated as follows. Activated by calcium and magnesium. Inhibited by copper. In terms of biological role, cleaves arabinose units from O-2- or O-3-monosubstituted xylose residues, thereby assisting in arabinoxylan (AX) and short-chain arabinoxylo-oligosaccharide (AXOS) degradation. Preferres wheat flour xylan over oat spelt xylan as substrate. Does not display endoxylanase activity. This chain is Arabinoxylan arabinofuranohydrolase (xynD), found in Paenibacillus polymyxa (Bacillus polymyxa).